The chain runs to 284 residues: Bifunctional protein FolD 1 (284 aa).

NADP(+) is bound by residues 166-168 and Ile232; that span reads GAS.

This sequence belongs to the tetrahydrofolate dehydrogenase/cyclohydrolase family. As to quaternary structure, homodimer.

The catalysed reaction is (6R)-5,10-methylene-5,6,7,8-tetrahydrofolate + NADP(+) = (6R)-5,10-methenyltetrahydrofolate + NADPH. It carries out the reaction (6R)-5,10-methenyltetrahydrofolate + H2O = (6R)-10-formyltetrahydrofolate + H(+). It functions in the pathway one-carbon metabolism; tetrahydrofolate interconversion. In terms of biological role, catalyzes the oxidation of 5,10-methylenetetrahydrofolate to 5,10-methenyltetrahydrofolate and then the hydrolysis of 5,10-methenyltetrahydrofolate to 10-formyltetrahydrofolate. In Pseudomonas syringae pv. tomato (strain ATCC BAA-871 / DC3000), this protein is Bifunctional protein FolD 1.